The following is a 329-amino-acid chain: Lipoyl synthase (329 aa).

Positions 72, 77, 83, 98, 102, 105, and 313 each coordinate [4Fe-4S] cluster. The 221-residue stretch at 83-303 (CWSHGTATIM…QIGLKKGFFE (221 aa)) folds into the Radical SAM core domain.

The protein belongs to the radical SAM superfamily. Lipoyl synthase family. Requires [4Fe-4S] cluster as cofactor.

The protein resides in the cytoplasm. The enzyme catalyses [[Fe-S] cluster scaffold protein carrying a second [4Fe-4S](2+) cluster] + N(6)-octanoyl-L-lysyl-[protein] + 2 oxidized [2Fe-2S]-[ferredoxin] + 2 S-adenosyl-L-methionine + 4 H(+) = [[Fe-S] cluster scaffold protein] + N(6)-[(R)-dihydrolipoyl]-L-lysyl-[protein] + 4 Fe(3+) + 2 hydrogen sulfide + 2 5'-deoxyadenosine + 2 L-methionine + 2 reduced [2Fe-2S]-[ferredoxin]. It participates in protein modification; protein lipoylation via endogenous pathway; protein N(6)-(lipoyl)lysine from octanoyl-[acyl-carrier-protein]: step 2/2. Functionally, catalyzes the radical-mediated insertion of two sulfur atoms into the C-6 and C-8 positions of the octanoyl moiety bound to the lipoyl domains of lipoate-dependent enzymes, thereby converting the octanoylated domains into lipoylated derivatives. The polypeptide is Lipoyl synthase (Legionella pneumophila (strain Corby)).